The sequence spans 1780 residues: Chitin synthase Vb (1780 aa).

N-linked (GlcNAc...) asparagine glycans are attached at residues Asn-133, Asn-153, Asn-629, Asn-644, Asn-655, and Asn-660. 2 helical membrane passes run 740 to 760 (AWIA…LKFI) and 776 to 796 (FVLF…IIGF). Positions 805-866 (NKAWNVKEVA…LSGMVMDNYF (62 aa)) constitute a Cytochrome b5 heme-binding domain. Asn-888 and Asn-1009 each carry an N-linked (GlcNAc...) asparagine glycan. A helical membrane pass occupies residues 1046 to 1066 (LLLAFAIIICIVTAVKFLAAL). N-linked (GlcNAc...) asparagine glycosylation occurs at Asn-1411. 3 consecutive transmembrane segments (helical) span residues 1442–1462 (LCGT…IYIL), 1469–1489 (IPYI…LIFI), and 1497–1517 (IGWM…LPLY). Residue Asn-1524 is glycosylated (N-linked (GlcNAc...) asparagine). The segment at 1649–1691 (TGVHDMRSQSPYQDYPGQHPSVSNLRGQANLSPATGGGHSRSG) is disordered. A compositionally biased stretch (polar residues) spans 1668–1681 (PSVSNLRGQANLSP). Residues 1722–1778 (GPNDMAIVESIRSVLCEVDLDTVTKKQVRALVEQRLQTELVGERRTFMDRQIDHELE) form the DEK-C domain.

This sequence belongs to the chitin synthase family. Class VII subfamily.

The protein localises to the cell membrane. It carries out the reaction [(1-&gt;4)-N-acetyl-beta-D-glucosaminyl](n) + UDP-N-acetyl-alpha-D-glucosamine = [(1-&gt;4)-N-acetyl-beta-D-glucosaminyl](n+1) + UDP + H(+). Its function is as follows. Polymerizes chitin, a structural polymer of the cell wall and septum, by transferring the sugar moiety of UDP-GlcNAc to the non-reducing end of the growing chitin polymer. ChsV and chsVb do perform additive, but not redundant, functions in septum formation. Functions not only in the maintenance of cell wall integrity under different osmotic conditions but also in polarized cell wall synthesis. Plays an important role in the complex infection process of this fungus. This chain is Chitin synthase Vb, found in Fusarium oxysporum f. sp. lycopersici (strain 4287 / CBS 123668 / FGSC 9935 / NRRL 34936) (Fusarium vascular wilt of tomato).